A 123-amino-acid chain; its full sequence is Small ribosomal subunit protein uS13 (123 aa).

The disordered stretch occupies residues Ala94–Lys123. Basic residues predominate over residues Gln101–Lys123.

Belongs to the universal ribosomal protein uS13 family. As to quaternary structure, part of the 30S ribosomal subunit. Forms a loose heterodimer with protein S19. Forms two bridges to the 50S subunit in the 70S ribosome.

Functionally, located at the top of the head of the 30S subunit, it contacts several helices of the 16S rRNA. In the 70S ribosome it contacts the 23S rRNA (bridge B1a) and protein L5 of the 50S subunit (bridge B1b), connecting the 2 subunits; these bridges are implicated in subunit movement. Contacts the tRNAs in the A and P-sites. This chain is Small ribosomal subunit protein uS13, found in Acetivibrio thermocellus (strain ATCC 27405 / DSM 1237 / JCM 9322 / NBRC 103400 / NCIMB 10682 / NRRL B-4536 / VPI 7372) (Clostridium thermocellum).